The primary structure comprises 357 residues: Membrane-bound lytic murein transglycosylase C (357 aa).

The N-terminal stretch at 1–16 is a signal peptide; sequence MKKILPLVIIAPLLIS. Cys17 is lipidated: N-palmitoyl cysteine. Cys17 carries S-diacylglycerol cysteine lipidation.

This sequence belongs to the transglycosylase Slt family.

The protein localises to the cell outer membrane. The enzyme catalyses Exolytic cleavage of the (1-&gt;4)-beta-glycosidic linkage between N-acetylmuramic acid (MurNAc) and N-acetylglucosamine (GlcNAc) residues in peptidoglycan, from either the reducing or the non-reducing ends of the peptidoglycan chains, with concomitant formation of a 1,6-anhydrobond in the MurNAc residue.. Its function is as follows. Murein-degrading enzyme. May play a role in recycling of muropeptides during cell elongation and/or cell division. This chain is Membrane-bound lytic murein transglycosylase C, found in Sodalis glossinidius (strain morsitans).